The sequence spans 129 residues: Small ribosomal subunit protein uS11 (129 aa).

The protein belongs to the universal ribosomal protein uS11 family. In terms of assembly, part of the 30S ribosomal subunit. Interacts with proteins S7 and S18. Binds to IF-3.

Located on the platform of the 30S subunit, it bridges several disparate RNA helices of the 16S rRNA. Forms part of the Shine-Dalgarno cleft in the 70S ribosome. This Histophilus somni (strain 129Pt) (Haemophilus somnus) protein is Small ribosomal subunit protein uS11.